Here is a 213-residue protein sequence, read N- to C-terminus: Peptidyl-tRNA hydrolase (213 aa).

Residue Tyr-15 coordinates tRNA. His-20 acts as the Proton acceptor in catalysis. The tRNA site is built by Phe-66, Asn-68, and Asn-114. The interval 187 to 213 (HTTKPPRPKPPRPAAAPVDAPAAPGDQ) is disordered. Low complexity predominate over residues 201 to 213 (AAPVDAPAAPGDQ).

It belongs to the PTH family. As to quaternary structure, monomer.

The protein localises to the cytoplasm. The enzyme catalyses an N-acyl-L-alpha-aminoacyl-tRNA + H2O = an N-acyl-L-amino acid + a tRNA + H(+). Hydrolyzes ribosome-free peptidyl-tRNAs (with 1 or more amino acids incorporated), which drop off the ribosome during protein synthesis, or as a result of ribosome stalling. Its function is as follows. Catalyzes the release of premature peptidyl moieties from peptidyl-tRNA molecules trapped in stalled 50S ribosomal subunits, and thus maintains levels of free tRNAs and 50S ribosomes. In Paracidovorax citrulli (strain AAC00-1) (Acidovorax citrulli), this protein is Peptidyl-tRNA hydrolase.